The sequence spans 1274 residues: MPEPGKKPVSAFSKKPRSVEVAAGSPAVFEAETERAGVKVRWQRGGSDISASNKYGLATEGTRHTLTVREVGPADQGSYAVIAGSSKVKFDLKVIEAEKAEPMLAPAPAPAEATGAPGEAPAPAAELGESAPSPKGSSSAALNGPTPGAPDDPIGLFVMRPQDGEVTVGGSITFSARVAGASLLKPPVVKWFKGKWVDLSSKVGQHLQLHDSYDRASKVYLFELHITDAQPAFTGSYRCEVSTKDKFDCSNFNLTVHEAMGTGDLDLLSAFRRTSLAGGGRRISDSHEDTGILDFSSLLKKRDSFRTPRDSKLEAPAEEDVWEILRQAPPSEYERIAFQYGVTDLRGMLKRLKGMRRDEKKSTAFQKKLEPAYQVSKGHKIRLTVELADHDAEVKWLKNGQEIQMSGSKYIFESIGAKRTLTISQCSLADDAAYQCVVGGEKCSTELFVKEPPVLITRPLEDQLVMVGQRVEFECEVSEEGAQVKWLKDGVELTREETFKYRFKKDGQRHHLIINEAMLEDAGHYALCTSGGQALAELIVQEKKLEVYQSIADLMVGAKDQAVFKCEVSDENVRGVWLKNGKELVPDSRIKVSHIGRVHKLTIDDVTPADEADYSFVPEGFACNLSAKLHFMEVKIDFVPRQEPPKIHLDCPGRIPDTIVVVAGNKLRLDVPISGDPAPTVIWQKAITQGNKAPARPAPDAPEDTGDSDEWVFDKKLLCETEGRVRVETTKDRSIFTVEGAEKEDEGVYTVTVKNPVGEDQVNLTVKVIDVPDAPAAPKISNVGEDSCTVQWEPPAYDGGQPILGYILERKKKKSYRWMRLNFDLIQELSHEARRMIEGVVYEMRVYAVNAIGMSRPSPASQPFMPIGPPSEPTHLAVEDVSDTTVSLKWRPPERVGAGGLDGYSVEYCPEGCSEWVAALQGLTEHTSILVKDLPTGARLLFRVRAHNMAGPGAPVTTTEPVTVQEILQRPRLQLPRHLRQTIQKKVGEPVNLLIPFQGKPRPQVTWTKEGQPLAGEEVSIRNSPTDTILFIRAARRVHSGTYQVTVRIENMEDKATLVLQVVDKPSPPQDLRVTDAWGLNVALEWKPPQDVGNTELWGYTVQKADKKTMEWFTVLEHYRRTHCVVPELIIGNGYYFRVFSQNMVGFSDRAATTKEPVFIPRPGITYEPPNYKALDFSEAPSFTQPLVNRSVIAGYTAMLCCAVRGSPKPKISWFKNGLDLGEDARFRMFSKQGVLTLEIRKPCPFDGGIYVCRATNLQGEARCECRLEVRVPQ.

The residue at position 1 (methionine 1) is an N-acetylmethionine. Phosphoserine is present on serine 47. Residues 107-141 (APAPAEATGAPGEAPAPAAELGESAPSPKGSSSAA) are compositionally biased toward low complexity. The interval 107–153 (APAPAEATGAPGEAPAPAAELGESAPSPKGSSSAALNGPTPGAPDDP) is disordered. Residues 153–256 (PIGLFVMRPQ…FDCSNFNLTV (104 aa)) enclose the Ig-like C2-type 1 domain. Zn(2+) is bound by residues glutamine 208, histidine 210, glutamate 223, and histidine 225. Phosphoserine; by PKA and PKC occurs at positions 275, 284, and 304. 2 positions are modified to phosphoserine: serine 311 and serine 427. 4 consecutive Ig-like C2-type domains span residues 362–452 (STAF…VKEP), 453–543 (PVLI…VQEK), 544–633 (KLEV…HFME), and 645–771 (PKIH…VIDV). Cysteine 436 and cysteine 443 are disulfide-bonded. At serine 550 the chain carries Phosphoserine. Threonine 607 is modified (phosphothreonine). Fibronectin type-III domains are found at residues 774–870 (APAA…IGPP) and 872–967 (EPTH…VQEI). In terms of domain architecture, Ig-like C2-type 6 spans 971–1065 (PRLQLPRHLR…ATLVLQVVDK (95 aa)). Residues 1068-1163 (PPQDLRVTDA…TKEPVFIPRP (96 aa)) enclose the Fibronectin type-III 3 domain. In terms of domain architecture, Ig-like C2-type 7 spans 1181-1274 (PSFTQPLVNR…ECRLEVRVPQ (94 aa)). At arginine 1241 the chain carries Omega-N-methylarginine.

This sequence belongs to the immunoglobulin superfamily. MyBP family. In terms of processing, substrate for phosphorylation by PKA and PKC. Reversible phosphorylation appears to modulate contraction. Post-translationally, polyubiquitinated.

In terms of biological role, thick filament-associated protein located in the crossbridge region of vertebrate striated muscle a bands. In vitro it binds MHC, F-actin and native thin filaments, and modifies the activity of actin-activated myosin ATPase. It may modulate muscle contraction or may play a more structural role. This Homo sapiens (Human) protein is Myosin-binding protein C, cardiac-type (MYBPC3).